Consider the following 640-residue polypeptide: Probable potassium transport system protein Kup 1 (640 aa).

12 helical membrane-spanning segments follow: residues 25-45 (LVLA…LYAL), 65-85 (VVSL…VMVL), 115-135 (AVGW…DGVI), 153-173 (PALA…LFMI), 181-201 (VGAA…ALGL), 227-247 (GFAG…AEAL), 263-283 (WYGL…ALLL), 305-325 (MVAL…TAVF), 353-373 (IYLP…VLGF), 381-401 (AAFG…FAVL), 410-430 (WWAV…FWLA), and 438-458 (GGWL…CWFG).

This sequence belongs to the HAK/KUP transporter (TC 2.A.72) family.

It localises to the cell inner membrane. The catalysed reaction is K(+)(in) + H(+)(in) = K(+)(out) + H(+)(out). Functionally, transport of potassium into the cell. Likely operates as a K(+):H(+) symporter. This chain is Probable potassium transport system protein Kup 1, found in Chromobacterium violaceum (strain ATCC 12472 / DSM 30191 / JCM 1249 / CCUG 213 / NBRC 12614 / NCIMB 9131 / NCTC 9757 / MK).